A 409-amino-acid chain; its full sequence is Peptidase T (409 aa).

H78 serves as a coordination point for Zn(2+). Residue D80 is part of the active site. D140 provides a ligand contact to Zn(2+). E174 serves as the catalytic Proton acceptor. Positions 175, 197, and 379 each coordinate Zn(2+).

This sequence belongs to the peptidase M20B family. Zn(2+) is required as a cofactor.

The protein resides in the cytoplasm. It carries out the reaction Release of the N-terminal residue from a tripeptide.. Its function is as follows. Cleaves the N-terminal amino acid of tripeptides. The chain is Peptidase T from Photobacterium profundum (strain SS9).